A 559-amino-acid polypeptide reads, in one-letter code: Glycerol kinase (559 aa).

Threonine 20 provides a ligand contact to ADP. ATP is bound by residues threonine 20, serine 21, and serine 22. Residue threonine 20 coordinates sn-glycerol 3-phosphate. Arginine 24 contacts ADP. The sn-glycerol 3-phosphate site is built by arginine 94, glutamate 95, and tyrosine 148. Residues arginine 94, glutamate 95, and tyrosine 148 each coordinate glycerol. Glycine 252 is a beta-D-fructose 1,6-bisphosphate binding site. A sn-glycerol 3-phosphate-binding site is contributed by aspartate 265. Glycerol-binding residues include aspartate 265 and glutamine 266. The ADP site is built by threonine 287, glycine 332, glycine 433, and asparagine 437. Threonine 287, glycine 332, and glycine 433 together coordinate ATP. Position 501 (glutamate 501) interacts with Zn(2+). A helical membrane pass occupies residues 532-552 (IFCSLPLGFFIVSSVVMLIGA).

It belongs to the FGGY kinase family.

The protein resides in the mitochondrion outer membrane. It is found in the nucleus. The protein localises to the cytoplasm. It localises to the cytosol. It carries out the reaction glycerol + ATP = sn-glycerol 3-phosphate + ADP + H(+). The protein operates within polyol metabolism; glycerol degradation via glycerol kinase pathway; sn-glycerol 3-phosphate from glycerol: step 1/1. Its function is as follows. Kinase that plays a key role in glycerol metabolism, catalyzing its phosphorylation to produce sn-glycerol 3-phosphate. Sn-glycerol 3-phosphate is a crucial intermediate in various metabolic pathways, such as the synthesis of glycerolipids and triglycerides, glycogenesis, glycolysis and gluconeogenesis. The protein is Glycerol kinase of Bos taurus (Bovine).